The following is a 257-amino-acid chain: Glucose-1-phosphate cytidylyltransferase (257 aa).

Substrate contacts are provided by residues 6-10, 11-13, K23, S104, R109, and G128; these read LAGGL and GTR. D129 and D234 together coordinate Mg(2+).

It belongs to the glucose-1-phosphate cytidylyltransferase family. In terms of assembly, homohexamer. Mg(2+) serves as cofactor.

The catalysed reaction is alpha-D-glucose 1-phosphate + CTP + H(+) = CDP-D-glucose + diphosphate. The protein operates within nucleotide-sugar biosynthesis; CDP-3,6-dideoxy-D-mannose biosynthesis; CDP-3,6-dideoxy-D-mannose from CTP and alpha-D-glucose 1-phosphate: step 1/5. It functions in the pathway bacterial outer membrane biogenesis; LPS O-antigen biosynthesis. Involved in the biosynthesis of the tyvelose, a 3,6-dideoxyhexose found in the O-antigen of the surface lipopolysaccharides. It catalyzes the transfer of a CMP moiety from CTP to glucose 1-phosphate. This Salmonella typhimurium (strain LT2 / SGSC1412 / ATCC 700720) protein is Glucose-1-phosphate cytidylyltransferase (rfbF).